We begin with the raw amino-acid sequence, 216 residues long: Cyclo(L-leucyl-L-leucyl) synthase (216 aa).

Ser-14 serves as the catalytic Nucleophile. Residues Asn-17, 155–159 (YIFDE), and Tyr-179 each bind substrate.

This sequence belongs to the CDPS family.

It catalyses the reaction 2 L-leucyl-tRNA(Leu) = cyclo(L-leucyl-L-leucyl) + 2 tRNA(Leu) + 2 H(+). Functionally, it uses activated amino acids in the form of aminoacyl-tRNAs (aa-tRNAs) as substrates to catalyze the ATP-independent formation of cyclodipeptides which are intermediates in diketopiperazine (DKP) biosynthetic pathways. Catalyzes the formation of cyclo(L-Leu-L-Leu) (cLL) from L-leucyl-tRNA(Leu). Can incorporate various nonpolar residues, such as L-leucine and L-methionine, into cyclodipeptides. In Corynebacterium jeikeium (strain K411), this protein is Cyclo(L-leucyl-L-leucyl) synthase.